The sequence spans 394 residues: MASPLLPGPPDQRRNLDWCWSKLPSDLMQFVFDRLGFADFQRAKSVCSSWLSVSRNSQPNNQIPWMIRFPKDNNHCLLFNPEEEDKMYKTPNLGNDFAKSSCIASYGSWLLMQPESEYMEEDLDHQCNNLYILDLLTRERINLPILQPEFGLTCPILWTDEKSKDHLVIGMAHEELAISFKKGDSSWKQIPTLSGIEECFSMVFKDHKLYCLSNYKLKVFDFSGDIPVKVFKTSVSKLLNNPLCISMRMRLPGIPMKDQLNHFKDDMVVTLAGHVLIVKCHRPSLSKIWSFEIYKMEGNNNKWEKTVSLGDETILLDLGITVLAKDMQGIKANSIYFSNPTPYFKDQYDENEIFIFDLDSNTVEQPHRSVSSSFPRSRARWFLPCFKRESYFLQ.

The F-box domain maps to 17–63; sequence DWCWSKLPSDLMQFVFDRLGFADFQRAKSVCSSWLSVSRNSQPNNQI.

This Arabidopsis thaliana (Mouse-ear cress) protein is Putative F-box protein At5g66830.